We begin with the raw amino-acid sequence, 420 residues long: Histidine--tRNA ligase (420 aa).

The protein belongs to the class-II aminoacyl-tRNA synthetase family. In terms of assembly, homodimer.

Its subcellular location is the cytoplasm. The enzyme catalyses tRNA(His) + L-histidine + ATP = L-histidyl-tRNA(His) + AMP + diphosphate + H(+). This chain is Histidine--tRNA ligase, found in Macrococcus caseolyticus (strain JCSC5402) (Macrococcoides caseolyticum).